A 97-amino-acid chain; its full sequence is Defensin-like protein 245 (97 aa).

The signal sequence occupies residues 1–24 (MKFAAILLVTCVLFSLLPSHLSQG). Disulfide bonds link Cys-39–Cys-96, Cys-50–Cys-79, Cys-58–Cys-89, and Cys-77–Cys-91.

The protein belongs to the DEFL family. As to expression, flower buds and roots.

Its subcellular location is the secreted. The sequence is that of Defensin-like protein 245 (SCRL4) from Arabidopsis thaliana (Mouse-ear cress).